Reading from the N-terminus, the 207-residue chain is Dephospho-CoA kinase (207 aa).

One can recognise a DPCK domain in the interval 4–203 (VIGLTGGIAS…EEGYIEKPNY (200 aa)). 12 to 17 (ASGKST) is an ATP binding site.

The protein belongs to the CoaE family.

The protein localises to the cytoplasm. The enzyme catalyses 3'-dephospho-CoA + ATP = ADP + CoA + H(+). It participates in cofactor biosynthesis; coenzyme A biosynthesis; CoA from (R)-pantothenate: step 5/5. Its function is as follows. Catalyzes the phosphorylation of the 3'-hydroxyl group of dephosphocoenzyme A to form coenzyme A. This Staphylococcus aureus (strain USA300) protein is Dephospho-CoA kinase.